A 111-amino-acid polypeptide reads, in one-letter code: Ribonuclease P protein component (111 aa).

It belongs to the RnpA family. Consists of a catalytic RNA component (M1 or rnpB) and a protein subunit.

It catalyses the reaction Endonucleolytic cleavage of RNA, removing 5'-extranucleotides from tRNA precursor.. Its function is as follows. RNaseP catalyzes the removal of the 5'-leader sequence from pre-tRNA to produce the mature 5'-terminus. It can also cleave other RNA substrates such as 4.5S RNA. The protein component plays an auxiliary but essential role in vivo by binding to the 5'-leader sequence and broadening the substrate specificity of the ribozyme. This is Ribonuclease P protein component from Borrelia garinii subsp. bavariensis (strain ATCC BAA-2496 / DSM 23469 / PBi) (Borreliella bavariensis).